The following is a 486-amino-acid chain: Transcription factor bHLH49 (486 aa).

Over residues 1–17 (MDLSAKDEFSAEKRNPD) the composition is skewed to basic and acidic residues. Disordered stretches follow at residues 1–30 (MDLS…GDWR) and 194–300 (KEST…KDGY). 2 stretches are compositionally biased toward polar residues: residues 198-221 (VRSS…TQSS) and 243-254 (QKNSEAAQSHRS). The span at 273–293 (QSPNSPGKKSNSGKQQGKQSS) shows a compositional bias: low complexity. In terms of domain architecture, bHLH spans 309–359 (QATNSHSLAERVRREKISERMKFLQDLVPGCNKVTGKAVMLDEIINYVQSL).

Homodimer. Interacts with IBH1. Expressed constitutively in roots, stems, and flowers.

It is found in the nucleus. Transcriptional activator involved in cell elongation. Regulates the expression of a subset of genes involved in cell expansion by binding to the G-box motif. The protein is Transcription factor bHLH49 (BHLH49) of Arabidopsis thaliana (Mouse-ear cress).